Consider the following 285-residue polypeptide: HTH-type transcriptional regulator MurR (285 aa).

Positions 1–77 (MLYLTKIRNA…MALIGEYSAS (77 aa)) constitute an HTH rpiR-type domain. The H-T-H motif DNA-binding region spans 37–56 (SRKMAKQLGISQSSIVKFAQ). The region spanning 128–268 (IIEVISKAPF…FVGLVQLNDV (141 aa)) is the SIS domain.

In terms of assembly, homotetramer.

Its pathway is amino-sugar metabolism; N-acetylmuramate degradation [regulation]. Represses the expression of the murPQ operon involved in the uptake and degradation of N-acetylmuramic acid (MurNAc). Binds to two adjacent inverted repeats within the operator region. MurNAc 6-phosphate, the substrate of MurQ, is the specific inducer that weakens binding of MurR to the operator. This chain is HTH-type transcriptional regulator MurR, found in Escherichia coli O9:H4 (strain HS).